The following is a 205-amino-acid chain: MNQQYPSTLLEKAVGEFSKLPGIGRKTAMRLVLHLLRQDTSVVEAFGSSIITLKHEVKYCKVCHNISDTETCQICANPQRDASMVCVVENIRDVMAVEATQQYRGLYHVLGGVISPMDGVGPGDLQIESLVRRVAEGGINEVILALSTTMEGDTTNFYIYRKLEKMGVKLSVLARGVSIGDELEYTDEITLGRSIVNRTTFTGTV.

The C4-type zinc-finger motif lies at 60–75 (CKVCHNISDTETCQIC). Residues 83-178 (SMVCVVENIR…KLSVLARGVS (96 aa)) form the Toprim domain.

Belongs to the RecR family.

May play a role in DNA repair. It seems to be involved in an RecBC-independent recombinational process of DNA repair. It may act with RecF and RecO. This chain is Recombination protein RecR, found in Bacteroides fragilis (strain ATCC 25285 / DSM 2151 / CCUG 4856 / JCM 11019 / LMG 10263 / NCTC 9343 / Onslow / VPI 2553 / EN-2).